The primary structure comprises 447 residues: Phosphoglucosamine mutase (447 aa).

The active-site Phosphoserine intermediate is serine 100. The Mg(2+) site is built by serine 100, aspartate 239, aspartate 241, and aspartate 243. Serine 100 carries the phosphoserine modification.

The protein belongs to the phosphohexose mutase family. Requires Mg(2+) as cofactor. Post-translationally, activated by phosphorylation.

The enzyme catalyses alpha-D-glucosamine 1-phosphate = D-glucosamine 6-phosphate. Functionally, catalyzes the conversion of glucosamine-6-phosphate to glucosamine-1-phosphate. The chain is Phosphoglucosamine mutase from Thermoanaerobacter pseudethanolicus (strain ATCC 33223 / 39E) (Clostridium thermohydrosulfuricum).